Reading from the N-terminus, the 365-residue chain is tRNA N6-adenosine threonylcarbamoyltransferase (365 aa).

Residues histidine 122 and histidine 126 each contribute to the Fe cation site. Substrate-binding positions include 147–151, aspartate 180, glycine 193, and asparagine 293; that span reads LVSGG. Aspartate 321 lines the Fe cation pocket. The tract at residues 340-365 is disordered; that stretch reads PNEIDTAARPRWPLSERTPATPEHVS.

Belongs to the KAE1 / TsaD family. Fe(2+) serves as cofactor.

The protein localises to the cytoplasm. The enzyme catalyses L-threonylcarbamoyladenylate + adenosine(37) in tRNA = N(6)-L-threonylcarbamoyladenosine(37) in tRNA + AMP + H(+). Functionally, required for the formation of a threonylcarbamoyl group on adenosine at position 37 (t(6)A37) in tRNAs that read codons beginning with adenine. Is involved in the transfer of the threonylcarbamoyl moiety of threonylcarbamoyl-AMP (TC-AMP) to the N6 group of A37, together with TsaE and TsaB. TsaD likely plays a direct catalytic role in this reaction. The protein is tRNA N6-adenosine threonylcarbamoyltransferase of Gluconobacter oxydans (strain 621H) (Gluconobacter suboxydans).